We begin with the raw amino-acid sequence, 294 residues long: Indole-3-glycerol phosphate synthase (294 aa).

The protein belongs to the TrpC family.

The catalysed reaction is 1-(2-carboxyphenylamino)-1-deoxy-D-ribulose 5-phosphate + H(+) = (1S,2R)-1-C-(indol-3-yl)glycerol 3-phosphate + CO2 + H2O. Its pathway is amino-acid biosynthesis; L-tryptophan biosynthesis; L-tryptophan from chorismate: step 4/5. This Crocosphaera subtropica (strain ATCC 51142 / BH68) (Cyanothece sp. (strain ATCC 51142)) protein is Indole-3-glycerol phosphate synthase.